An 89-amino-acid chain; its full sequence is Acylphosphatase (89 aa).

Residues 3-89 form the Acylphosphatase-like domain; that stretch reads CKRWILYGRV…GNYGSFHIEY (87 aa). Catalysis depends on residues Arg-18 and Asn-36.

The protein belongs to the acylphosphatase family.

The catalysed reaction is an acyl phosphate + H2O = a carboxylate + phosphate + H(+). This Petrotoga mobilis (strain DSM 10674 / SJ95) protein is Acylphosphatase (acyP).